We begin with the raw amino-acid sequence, 156 residues long: 6,7-dimethyl-8-ribityllumazine synthase (156 aa).

5-amino-6-(D-ribitylamino)uracil is bound by residues F23, S57 to E59, and A81 to V83. E86–T87 is a (2S)-2-hydroxy-3-oxobutyl phosphate binding site. H89 serves as the catalytic Proton donor. F114 provides a ligand contact to 5-amino-6-(D-ribitylamino)uracil. R128 contacts (2S)-2-hydroxy-3-oxobutyl phosphate.

The protein belongs to the DMRL synthase family.

The enzyme catalyses (2S)-2-hydroxy-3-oxobutyl phosphate + 5-amino-6-(D-ribitylamino)uracil = 6,7-dimethyl-8-(1-D-ribityl)lumazine + phosphate + 2 H2O + H(+). Its pathway is cofactor biosynthesis; riboflavin biosynthesis; riboflavin from 2-hydroxy-3-oxobutyl phosphate and 5-amino-6-(D-ribitylamino)uracil: step 1/2. Functionally, catalyzes the formation of 6,7-dimethyl-8-ribityllumazine by condensation of 5-amino-6-(D-ribitylamino)uracil with 3,4-dihydroxy-2-butanone 4-phosphate. This is the penultimate step in the biosynthesis of riboflavin. The protein is 6,7-dimethyl-8-ribityllumazine synthase of Salinibacter ruber (strain DSM 13855 / M31).